The sequence spans 384 residues: L-type lectin-like domain-containing protein C4F6.05c (384 aa).

The N-terminal stretch at 1–19 (MKFCSLFHVLSFCCTLAYA) is a signal peptide. The region spanning 20–224 (VPKSQFLQLH…DLVALSNLNI (205 aa)) is the L-type lectin-like domain. The Extracellular segment spans residues 20-353 (VPKSQFLQLH…AMGNAYSPYN (334 aa)). A disordered region spans residues 227-251 (PDTSNNENLNPTSNTKQSVGDNTSP). The helical transmembrane segment at 354 to 374 (LTNFMVFLLLGAIVSYGIMLV) threads the bilayer. The Cytoplasmic portion of the chain corresponds to 375-384 (RRDRRRHKYL).

It is found in the membrane. It localises to the endoplasmic reticulum. The protein localises to the golgi apparatus. This is L-type lectin-like domain-containing protein C4F6.05c from Schizosaccharomyces pombe (strain 972 / ATCC 24843) (Fission yeast).